Reading from the N-terminus, the 223-residue chain is Cytidylate kinase (223 aa).

Gly10–Ser18 provides a ligand contact to ATP.

This sequence belongs to the cytidylate kinase family. Type 1 subfamily.

It localises to the cytoplasm. It carries out the reaction CMP + ATP = CDP + ADP. It catalyses the reaction dCMP + ATP = dCDP + ADP. The sequence is that of Cytidylate kinase from Mycobacterium leprae (strain Br4923).